The sequence spans 163 residues: 2-C-methyl-D-erythritol 2,4-cyclodiphosphate synthase (163 aa).

A divalent metal cation contacts are provided by Asp-12 and His-14. Residues 12 to 14 (DVH) and 38 to 39 (HS) each bind 4-CDP-2-C-methyl-D-erythritol 2-phosphate. Position 46 (His-46) interacts with a divalent metal cation. 4-CDP-2-C-methyl-D-erythritol 2-phosphate is bound by residues 60–62 (DIG), 65–69 (FPDTD), 136–139 (TTTE), Phe-143, and Arg-146.

The protein belongs to the IspF family. As to quaternary structure, homotrimer. The cofactor is a divalent metal cation.

The catalysed reaction is 4-CDP-2-C-methyl-D-erythritol 2-phosphate = 2-C-methyl-D-erythritol 2,4-cyclic diphosphate + CMP. The protein operates within isoprenoid biosynthesis; isopentenyl diphosphate biosynthesis via DXP pathway; isopentenyl diphosphate from 1-deoxy-D-xylulose 5-phosphate: step 4/6. Functionally, involved in the biosynthesis of isopentenyl diphosphate (IPP) and dimethylallyl diphosphate (DMAPP), two major building blocks of isoprenoid compounds. Catalyzes the conversion of 4-diphosphocytidyl-2-C-methyl-D-erythritol 2-phosphate (CDP-ME2P) to 2-C-methyl-D-erythritol 2,4-cyclodiphosphate (ME-CPP) with a corresponding release of cytidine 5-monophosphate (CMP). The chain is 2-C-methyl-D-erythritol 2,4-cyclodiphosphate synthase from Acinetobacter baylyi (strain ATCC 33305 / BD413 / ADP1).